The chain runs to 443 residues: MSTTDSIVSSQTKQSSWRKSDTTWTLGLFGTAIGAGVLFFPIRAGFGGLIPILLMLVLAYPIAFYCHRALARLCLSGSNPSGNITETVEEHFGKTGGVVITFLYFFAICPLLWIYGVTITNTFMTFWENQLQMPALNRGFVALFLLLLMAFVIWFGKDLMVKVMSYLVWPFIASLVLISLSLIPYWNSAVIDQVDLSNIALTGHDGILVTVWLGISIMVFSFNFSPIVSSFVVSKREEYEKDFGREFTERKCSQIISRASMLMVAVVMFFAFSCLFTLSPANMADAKAQNIPVLSYLANHFASLSGTKSTFATVLEYGASIIALVAIFKSFFGHYLGTLEGLNGLVLKFGYKGDKTKVSLGKLNTISMIFIMGSTWVVAYANPNILDLIEAMGAPIIASLLCLLPMYAIRKAPSLAKYRGRLDNVFVTVIGLLTILNIVYKLF.

A run of 11 helical transmembrane segments spans residues 22–42, 44–64, 97–117, 140–160, 163–183, 207–227, 261–281, 319–339, 366–386, 389–409, and 423–443; these read TTWT…FFPI, AGFG…PIAF, GVVI…IYGV, FVAL…KDLM, VMSY…LSLI, ILVT…FSPI, MLMV…LSPA, ASII…LGTL, ISMI…PNIL, IEAM…MYAI, and DNVF…YKLF.

It belongs to the amino acid/polyamine transporter 2 family. SdaC/TdcC subfamily.

Its subcellular location is the cell inner membrane. It carries out the reaction L-threonine(in) + H(+)(in) = L-threonine(out) + H(+)(out). The catalysed reaction is L-serine(in) + H(+)(in) = L-serine(out) + H(+)(out). Involved in the import of threonine and serine into the cell, with the concomitant import of a proton (symport system). The polypeptide is Threonine/serine transporter TdcC (Citrobacter koseri (strain ATCC BAA-895 / CDC 4225-83 / SGSC4696)).